A 219-amino-acid polypeptide reads, in one-letter code: Large ribosomal subunit protein uL1 (219 aa).

Belongs to the universal ribosomal protein uL1 family. In terms of assembly, part of the 50S ribosomal subunit.

In terms of biological role, probably involved in E site tRNA release. Binds directly to 23S rRNA. Protein L1 is also a translational repressor protein, it controls the translation of its operon by binding to its mRNA. The polypeptide is Large ribosomal subunit protein uL1 (Methanocaldococcus jannaschii (strain ATCC 43067 / DSM 2661 / JAL-1 / JCM 10045 / NBRC 100440) (Methanococcus jannaschii)).